Reading from the N-terminus, the 427-residue chain is Glutamyl-tRNA(Gln) amidotransferase subunit D (427 aa).

Residues 74–407 (ERVYIIGAGG…EVVRKMFQRN (334 aa)) enclose the Asparaginase/glutaminase domain. Residues Thr-84, Thr-160, Asp-161, and Lys-240 contribute to the active site.

This sequence belongs to the asparaginase 1 family. GatD subfamily. As to quaternary structure, heterodimer of GatD and GatE.

The enzyme catalyses L-glutamyl-tRNA(Gln) + L-glutamine + ATP + H2O = L-glutaminyl-tRNA(Gln) + L-glutamate + ADP + phosphate + H(+). Allows the formation of correctly charged Gln-tRNA(Gln) through the transamidation of misacylated Glu-tRNA(Gln) in organisms which lack glutaminyl-tRNA synthetase. The reaction takes place in the presence of glutamine and ATP through an activated gamma-phospho-Glu-tRNA(Gln). The GatDE system is specific for glutamate and does not act on aspartate. This is Glutamyl-tRNA(Gln) amidotransferase subunit D from Aeropyrum pernix (strain ATCC 700893 / DSM 11879 / JCM 9820 / NBRC 100138 / K1).